A 90-amino-acid chain; its full sequence is Small ribosomal subunit protein uS15 (90 aa).

This sequence belongs to the universal ribosomal protein uS15 family. As to quaternary structure, part of the 30S ribosomal subunit. Forms a bridge to the 50S subunit in the 70S ribosome, contacting the 23S rRNA.

Its function is as follows. One of the primary rRNA binding proteins, it binds directly to 16S rRNA where it helps nucleate assembly of the platform of the 30S subunit by binding and bridging several RNA helices of the 16S rRNA. In terms of biological role, forms an intersubunit bridge (bridge B4) with the 23S rRNA of the 50S subunit in the ribosome. The protein is Small ribosomal subunit protein uS15 of Helicobacter acinonychis (strain Sheeba).